The primary structure comprises 471 residues: Tryptophanase (471 aa).

Lysine 5, lysine 115, and lysine 156 each carry N6-acetyllysine. N6-(pyridoxal phosphate)lysine is present on lysine 270. Residue lysine 450 is modified to N6-acetyllysine.

This sequence belongs to the beta-eliminating lyase family. In terms of assembly, homotetramer. It depends on pyridoxal 5'-phosphate as a cofactor.

It carries out the reaction L-tryptophan + H2O = indole + pyruvate + NH4(+). It functions in the pathway amino-acid degradation; L-tryptophan degradation via pyruvate pathway; indole and pyruvate from L-tryptophan: step 1/1. This chain is Tryptophanase, found in Escherichia coli O6:H1 (strain CFT073 / ATCC 700928 / UPEC).